A 555-amino-acid polypeptide reads, in one-letter code: Glutamine--tRNA ligase (555 aa).

The short motif at 34–44 (PEPNGYLHIGH) is the 'HIGH' region element. ATP-binding positions include 35 to 37 (EPN) and 41 to 47 (HIGHAKS). Aspartate 67 and tyrosine 212 together coordinate L-glutamine. Residues threonine 231, 261 to 262 (RL), and 269 to 271 (MSK) each bind ATP. A 'KMSKS' region motif is present at residues 268-272 (VMSKR). Residues 317-324 (TKQDNTIE) form an interaction with tRNA region.

It belongs to the class-I aminoacyl-tRNA synthetase family. In terms of assembly, monomer.

It localises to the cytoplasm. It carries out the reaction tRNA(Gln) + L-glutamine + ATP = L-glutaminyl-tRNA(Gln) + AMP + diphosphate. In Salmonella schwarzengrund (strain CVM19633), this protein is Glutamine--tRNA ligase.